The chain runs to 349 residues: GMP reductase (349 aa).

108–131 lines the NADP(+) pocket; that stretch reads IDFLKIKKIFLLSSELKYICIDVA. K(+)-binding residues include glycine 181 and glycine 183. Cysteine 186 acts as the Thioimidate intermediate in catalysis. 216–239 lines the NADP(+) pocket; the sequence is IISDGGCTVSGDIAKAFGGGADFV.

The protein belongs to the IMPDH/GMPR family. GuaC type 1 subfamily. In terms of assembly, homotetramer.

It carries out the reaction IMP + NH4(+) + NADP(+) = GMP + NADPH + 2 H(+). Functionally, catalyzes the irreversible NADPH-dependent deamination of GMP to IMP. It functions in the conversion of nucleobase, nucleoside and nucleotide derivatives of G to A nucleotides, and in maintaining the intracellular balance of A and G nucleotides. This chain is GMP reductase, found in Buchnera aphidicola subsp. Acyrthosiphon pisum (strain 5A).